Reading from the N-terminus, the 376-residue chain is Homeobox protein extradenticle (376 aa).

Residues 1–37 (MEDPNRMLAHTGGMMAPQGYGLSGQDDGQNAGSENEV) form a disordered region. One can recognise a PBC domain in the interval 38–237 (RKQKDIGEIL…VMILRSRFLD (200 aa)). Residues 45–124 (EILQQIMSIS…EGVAGPEKGG (80 aa)) form a PBC-A region. The tract at residues 127-237 (AAAASAAAAS…VMILRSRFLD (111 aa)) is PBC-B. A DNA-binding region (homeobox; TALE-type) is located at residues 238–300 (ARRKRRNFSK…NKRIRYKKNI (63 aa)). Positions 318-335 (ASPYSMAGPPSGTTTPMM) are enriched in low complexity. The interval 318 to 376 (ASPYSMAGPPSGTTTPMMSPAPPQDSMGYPMGSGGYDQQQPYDNSMGGYDPNLHQDLSP) is disordered.

Belongs to the TALE/PBX homeobox family. As to quaternary structure, interacts with Ubx and hth. Prior to full germband retraction it is ubiquitously present, after germband retraction, mostly present in the anterior portion of the ventral nerve cord.

It localises to the nucleus. Transcription factor which acts with the selector homeodomain proteins altering the regulation of downstream target genes such as wingless (wg), teashirt (tsh) and decapentaplegic (dpp), thus affecting segmental identity. Delimits the eye field and prevent inappropriate eye development. Required for proper localization of chordotonal organs within the peripheral nervous system. This chain is Homeobox protein extradenticle (exd), found in Drosophila melanogaster (Fruit fly).